Reading from the N-terminus, the 247-residue chain is Fumarate reductase iron-sulfur subunit (247 aa).

Tyr12 contributes to the a menaquinone binding site. The 2Fe-2S ferredoxin-type domain maps to 14-94 (PEIESAPTFQ…PGPVRVEPMR (81 aa)). [2Fe-2S] cluster is bound by residues Cys56, Cys61, and Cys76. A 4Fe-4S ferredoxin-type domain is found at 140-169 (LDAFKQFSMCINCMLCYSACPVYALDPDFL). [4Fe-4S] cluster contacts are provided by Cys149, Cys152, and Cys155. Residues Cys159, Cys205, and Cys211 each coordinate [3Fe-4S] cluster. Residue Cys215 participates in [4Fe-4S] cluster binding. Residue 226 to 229 (QRYK) participates in a menaquinone binding.

Belongs to the succinate dehydrogenase/fumarate reductase iron-sulfur protein family. As to quaternary structure, fumarate dehydrogenase forms part of an enzyme complex containing four subunits: a flavoprotein, an iron-sulfur, and two hydrophobic anchor proteins. It depends on [2Fe-2S] cluster as a cofactor. Requires [3Fe-4S] cluster as cofactor. [4Fe-4S] cluster serves as cofactor.

It is found in the cell membrane. The enzyme catalyses a quinone + succinate = fumarate + a quinol. It carries out the reaction a menaquinone + succinate = a menaquinol + fumarate. The polypeptide is Fumarate reductase iron-sulfur subunit (frdB) (Mycobacterium tuberculosis (strain CDC 1551 / Oshkosh)).